Reading from the N-terminus, the 266-residue chain is Mitochondrial import inner membrane translocase subunit Tim29 (266 aa).

The transit peptide at methionine 1 to leucine 37 directs the protein to the mitochondrion. Residues serine 38 to arginine 65 are Mitochondrial matrix-facing. Residues alanine 66–alanine 83 form a helical membrane-spanning segment. The Mitochondrial intermembrane portion of the chain corresponds to proline 84–arginine 266.

Component of the TIM22 complex, which core is composed of TIMM22, associated with TIMM10 (TIMM10A and/or TIMM10B), TIMM9, AGK and TIMM29. Interacts with TIMM10B; the interaction is direct. Interacts with TOMM40; linking the TIM22 complex to the TOM complex. Interacts with TIMM22 (when oxidized); the interaction is direct.

The protein resides in the mitochondrion inner membrane. Functionally, component of the TIM22 complex, a complex that mediates the import and insertion of multi-pass transmembrane proteins into the mitochondrial inner membrane. The TIM22 complex forms a twin-pore translocase that uses the membrane potential as the external driving force. Required for the stability of the TIM22 complex and functions in the assembly of the TIMM22 protein into the TIM22 complex. May facilitate cooperation between TIM22 and TOM complexes by interacting with TOMM40. This chain is Mitochondrial import inner membrane translocase subunit Tim29 (Timm29), found in Mus musculus (Mouse).